Consider the following 123-residue polypeptide: UPF0102 protein PSHAa2523 (123 aa).

It belongs to the UPF0102 family.

This chain is UPF0102 protein PSHAa2523, found in Pseudoalteromonas translucida (strain TAC 125).